A 492-amino-acid polypeptide reads, in one-letter code: ERAD-associated E3 ubiquitin-protein ligase HRD1A (492 aa).

At 1-3 the chain is on the cytoplasmic side; sequence MIR. A helical membrane pass occupies residues 4–24; it reads LRTYAGLSFMATLAVIYHAFS. The Lumenal portion of the chain corresponds to 25–40; sequence SRGQFYPATVYLSTSK. The chain crosses the membrane as a helical span at residues 41 to 61; that stretch reads ISLVLLLNMCLVLMLSLWHLV. Residues 62-98 lie on the Cytoplasmic side of the membrane; the sequence is KFVFLGSLREAEVERLNEQAWRELMEILFAITIFRQD. A helical transmembrane segment spans residues 99-119; that stretch reads FSSGFLPLVVTLLLIKALHWL. The Lumenal segment spans residues 120–135; it reads AQKRVEYIETTPSVSK. A helical transmembrane segment spans residues 136-156; sequence LSHFRIVSFMGFLLLVDSLFM. Residues 157 to 170 lie on the Cytoplasmic side of the membrane; sequence YSSIRHLIQSRQAS. A helical membrane pass occupies residues 171-191; sequence VSLFFSFEYMILATTTVAIFV. At 192–221 the chain is on the lumenal side; that stretch reads KYVFYVTDMLMDGQWEKKPVYTFYLELIRD. Residues 222-242 form a helical membrane-spanning segment; it reads LLHLSMYICFFFVIFMNYGVP. At 243-492 the chain is on the cytoplasmic side; the sequence is LHLLRELYET…KGKSVADAAE (250 aa). Residues 292-330 form an RING-type; atypical zinc finger; it reads CIICREEMTNAKKLICGHLFHVHCLRSWLERQQTCPTCR. Disordered regions lie at residues 339–379 and 470–492; these read ATSA…NSLS and ETRK…DAAE. Positions 351–378 are enriched in low complexity; the sequence is QGSQQGTSSSGNQGSEISSSAGVSNNSL. The span at 470–486 shows a compositional bias: basic and acidic residues; sequence ETRKPESAGEPENKGKS.

This sequence belongs to the HRD1 family.

It is found in the endoplasmic reticulum membrane. It carries out the reaction S-ubiquitinyl-[E2 ubiquitin-conjugating enzyme]-L-cysteine + [acceptor protein]-L-lysine = [E2 ubiquitin-conjugating enzyme]-L-cysteine + N(6)-ubiquitinyl-[acceptor protein]-L-lysine.. It functions in the pathway protein modification; protein ubiquitination. In terms of biological role, probable component of the HRD1 ubiquitin ligase complex that mediates the rapid degradation of misfolded endoplasmic reticulum (ER) proteins, a process called ER-associated degradation (ERAD). Targets the misfolded LRR receptor kinase BRI1. Functions redundantly with HRD3B. This chain is ERAD-associated E3 ubiquitin-protein ligase HRD1A, found in Arabidopsis thaliana (Mouse-ear cress).